Reading from the N-terminus, the 146-residue chain is MKLHELKPAEGSRKVRNRVGRGAATGNGKTSGRGQKGQKARSGGSVRPGFEGGQLPLFRRLPKRGFTNINRKEYAIVNLDQLNKFEDGTEVTPALLVESGVVKSEKSGIKILGTGSLDKKLTVKASKFSASAAEAIDAKGGAHEVI.

Residues 1–13 (MKLHELKPAEGSR) are compositionally biased toward basic and acidic residues. The segment at 1-56 (MKLHELKPAEGSRKVRNRVGRGAATGNGKTSGRGQKGQKARSGGSVRPGFEGGQLP) is disordered. The span at 23–35 (AATGNGKTSGRGQ) shows a compositional bias: gly residues.

It belongs to the universal ribosomal protein uL15 family. Part of the 50S ribosomal subunit.

Its function is as follows. Binds to the 23S rRNA. The sequence is that of Large ribosomal subunit protein uL15 from Staphylococcus saprophyticus subsp. saprophyticus (strain ATCC 15305 / DSM 20229 / NCIMB 8711 / NCTC 7292 / S-41).